Reading from the N-terminus, the 107-residue chain is MMKVLVVVALLVTLISYSSSEGIDDLEADELLSLMANEQTRKECVPKHHECTSNKHGCCRGNFFKYKCQCTTVVTQDGEQTERCFCGTPPHHKAAELVVGFGKKIFG.

Positions 1–20 are cleaved as a signal peptide; it reads MMKVLVVVALLVTLISYSSS. The propeptide occupies 21 to 41; sequence EGIDDLEADELLSLMANEQTR. Cystine bridges form between C44/C59, C51/C68, C58/C86, and C70/C84.

It belongs to the neurotoxin 19 (CSTX) family. 04 (U1-Lctx) subfamily. Expressed by the venom gland.

The protein localises to the secreted. The chain is U1-lycotoxin-Ls1c from Lycosa singoriensis (Wolf spider).